A 358-amino-acid chain; its full sequence is Trans-enoyl reductase milB (358 aa).

NADP(+) contacts are provided by residues 48-51 (VDTK), 170-173 (ATAT), 193-196 (SAKH), Y211, 258-259 (LD), and 349-350 (VR).

The protein belongs to the zinc-containing alcohol dehydrogenase family. In terms of assembly, monomer.

It catalyses the reaction 10 malonyl-CoA + acetyl-CoA + 3 AH2 + 8 NADPH + 18 H(+) = cordypyrone A + 3 A + 10 CO2 + 8 NADP(+) + 11 CoA + 8 H2O. The protein operates within secondary metabolite biosynthesis. Its function is as follows. Trans-enoyl reductase; part of the gene cluster that mediates the biosynthesis of cordypyrones A and B, 2 pyrones that show modest activities against pathogenic bacteria including methicillin-resistant Staphylococcus aureus (MRSA), Mycobacterium tuberculosis and Bacillus cereus. The HR-PKS milA catalyzes the formation of cordypyrones A via condensation of one acetate with 10 malonate units. Since milA lacks an enoyl reductase domain, the 2 beta-keto processing domains DH and KR of milA collaborate with the trans-enoyl reductase milB to catalyze the different levels of reduction. The cytochrome P450 monooxygenase milC then hydroxylates the C-22 of cordypyrones A to yield cordypyrones B. This is Trans-enoyl reductase milB from Cordyceps militaris (strain CM01) (Caterpillar fungus).